A 127-amino-acid chain; its full sequence is Fluoride-specific ion channel FluC (127 aa).

The next 4 membrane-spanning stretches (helical) occupy residues 4–24 (LLLAVFIGGGTGSVARWLLSM), 35–55 (LGTLAANLIGAFIIGMGFAWF), 71–91 (TGFCGGLTTFSTFSAEVVFLL), and 103–123 (VFVNLLGSFAMTALAFWLFSA). Gly75 and Thr78 together coordinate Na(+).

The protein belongs to the fluoride channel Fluc/FEX (TC 1.A.43) family.

It is found in the cell inner membrane. It catalyses the reaction fluoride(in) = fluoride(out). With respect to regulation, na(+) is not transported, but it plays an essential structural role and its presence is essential for fluoride channel function. Fluoride-specific ion channel. Important for reducing fluoride concentration in the cell, thus reducing its toxicity. The protein is Fluoride-specific ion channel FluC of Escherichia coli O81 (strain ED1a).